A 446-amino-acid polypeptide reads, in one-letter code: MQDQPVIATSDLSAHVGSTVVLRGWLYNKRSSGKLHFLELRDGFGTVQCVMAKSDVGDEVFAAADKVTQESVIDVVGEVKAHPKRAGVYEIAASGFRVLGPTAGEYPISPKEHGTDFLMDHRHLWLRSKRQHAILRVRHTIIQAIRDFFDGRGFTLVDAPVFTPNACEGTSTLFQTDYHGEKAYLTQSGQLYMEAAAAAFGKAYCFGPTFRAEKSKTRRHLAEFWMVEPEVAFMDLAGDMDLAEDFLCFIVERVLERRRPELAVLERDVGKLEAVKKPFPRIRYDEAVAILNEARAEKRKMAGEAEIPDFPWGEDFGGEDETIISGRYDRPVMIHRYPAQVKAFYMKRDPTDDRLALCVDVLAPEGYGEVIGGGQREDDLATLERAIEAHQLPPEAFGWYLDLRRYGTFPHAGFGLGVERSVAWICGLPHVRETIPFPRMLNRLSP.

This sequence belongs to the class-II aminoacyl-tRNA synthetase family. As to quaternary structure, homodimer.

It is found in the cytoplasm. The catalysed reaction is tRNA(Asn) + L-asparagine + ATP = L-asparaginyl-tRNA(Asn) + AMP + diphosphate + H(+). The chain is Asparagine--tRNA ligase from Sorangium cellulosum (strain So ce56) (Polyangium cellulosum (strain So ce56)).